The sequence spans 305 residues: Glycine--tRNA ligase alpha subunit (305 aa).

It belongs to the class-II aminoacyl-tRNA synthetase family. Tetramer of two alpha and two beta subunits.

Its subcellular location is the cytoplasm. The catalysed reaction is tRNA(Gly) + glycine + ATP = glycyl-tRNA(Gly) + AMP + diphosphate. This chain is Glycine--tRNA ligase alpha subunit, found in Streptococcus pneumoniae serotype 19F (strain G54).